The sequence spans 682 residues: DNA-directed RNA polymerase subunit beta' (682 aa).

Residues Cys69, Cys71, Cys87, and Cys90 each coordinate Zn(2+). Residues Asp489, Asp491, and Asp493 each coordinate Mg(2+).

The protein belongs to the RNA polymerase beta' chain family. RpoC1 subfamily. In terms of assembly, in plastids the minimal PEP RNA polymerase catalytic core is composed of four subunits: alpha, beta, beta', and beta''. When a (nuclear-encoded) sigma factor is associated with the core the holoenzyme is formed, which can initiate transcription. It depends on Mg(2+) as a cofactor. Zn(2+) serves as cofactor.

It localises to the plastid. It is found in the chloroplast. The catalysed reaction is RNA(n) + a ribonucleoside 5'-triphosphate = RNA(n+1) + diphosphate. In terms of biological role, DNA-dependent RNA polymerase catalyzes the transcription of DNA into RNA using the four ribonucleoside triphosphates as substrates. The protein is DNA-directed RNA polymerase subunit beta' of Oryza nivara (Indian wild rice).